The following is a 430-amino-acid chain: Serine/threonine transporter SstT (430 aa).

9 helical membrane-spanning segments follow: residues 24–44 (IIVGLIIGTVLALTMPHVTWI), 47–67 (FGTLFVAALKAAAPILVFVLV), 82–102 (FGTVLFLYLFTTFLAAVVAVL), 144–164 (AIIDGNYICILMWACLFGLAM), 186–206 (VIRWVINLAPFGIMGLVFTNV), 223–243 (LLVGTMLLMVLVFGPLVIFIF), 294–314 (IPLGATINMNGAAITITIMAM), 320–340 (LGIQISLPAAILLSVVSALGA), and 361–381 (FGISNDIAMQVVGVGFIIGVI).

It belongs to the dicarboxylate/amino acid:cation symporter (DAACS) (TC 2.A.23) family.

The protein resides in the cell membrane. The enzyme catalyses L-serine(in) + Na(+)(in) = L-serine(out) + Na(+)(out). It carries out the reaction L-threonine(in) + Na(+)(in) = L-threonine(out) + Na(+)(out). Functionally, involved in the import of serine and threonine into the cell, with the concomitant import of sodium (symport system). This chain is Serine/threonine transporter SstT, found in Bifidobacterium adolescentis (strain ATCC 15703 / DSM 20083 / NCTC 11814 / E194a).